We begin with the raw amino-acid sequence, 294 residues long: MATSRGDDLLPEIVVVTGMSGAGRSTAARALEDLDWFVVDNLPPALLPTMIDLAARTRGAVPQIAAVVDVRSMAFTEDLLSTVEDLRSRGIGARVVFLEASDETLVRRFESVRRPHPLQGDGRLTDGISRERELLRSIRGEADLVVDTSQLNVHQLKAKMVGFFGKARETRLRANVVSFGYKHGLPVDADLVLDCRFLPNPHWVPELRPLTGQDEPVRDYVLAQRGAKEMLDSYTEVLRLLVSGYQREGKHYMTLAVGCTGGKHRSVAMSEQLAARLRDEGVEVNIIHRDLGRE.

18-25 (GMSGAGRS) provides a ligand contact to ATP. Residue 69–72 (DVRS) coordinates GTP.

It belongs to the RapZ-like family.

Functionally, displays ATPase and GTPase activities. This Thermobifida fusca (strain YX) protein is Nucleotide-binding protein Tfu_2020.